The chain runs to 416 residues: 4-hydroxy-3-methylbut-2-en-1-yl diphosphate synthase (flavodoxin) (416 aa).

4 residues coordinate [4Fe-4S] cluster: C304, C307, C350, and E357.

This sequence belongs to the IspG family. It depends on [4Fe-4S] cluster as a cofactor.

The catalysed reaction is (2E)-4-hydroxy-3-methylbut-2-enyl diphosphate + oxidized [flavodoxin] + H2O + 2 H(+) = 2-C-methyl-D-erythritol 2,4-cyclic diphosphate + reduced [flavodoxin]. It participates in isoprenoid biosynthesis; isopentenyl diphosphate biosynthesis via DXP pathway; isopentenyl diphosphate from 1-deoxy-D-xylulose 5-phosphate: step 5/6. Its function is as follows. Converts 2C-methyl-D-erythritol 2,4-cyclodiphosphate (ME-2,4cPP) into 1-hydroxy-2-methyl-2-(E)-butenyl 4-diphosphate. This chain is 4-hydroxy-3-methylbut-2-en-1-yl diphosphate synthase (flavodoxin), found in Allorhizobium ampelinum (strain ATCC BAA-846 / DSM 112012 / S4) (Agrobacterium vitis (strain S4)).